Reading from the N-terminus, the 93-residue chain is Small ribosomal subunit protein uS19 (93 aa).

It belongs to the universal ribosomal protein uS19 family.

Functionally, protein S19 forms a complex with S13 that binds strongly to the 16S ribosomal RNA. The chain is Small ribosomal subunit protein uS19 from Campylobacter fetus subsp. fetus (strain 82-40).